The chain runs to 333 residues: Ketol-acid reductoisomerase (NADP(+)) (333 aa).

The region spanning 1 to 179 (MFYDDNADLS…GGTRAGVIKT (179 aa)) is the KARI N-terminal Rossmann domain. NADP(+) is bound by residues 22–25 (YGSQ), Ser48, Ser50, and 80–83 (DTAQ). His105 is a catalytic residue. Gly131 serves as a coordination point for NADP(+). Positions 180–325 (TFKDETETDL…KKLRDLMSWV (146 aa)) constitute a KARI C-terminal knotted domain. Residues Asp188, Glu192, Glu224, and Glu228 each contribute to the Mg(2+) site. Ser249 provides a ligand contact to substrate.

The protein belongs to the ketol-acid reductoisomerase family. Requires Mg(2+) as cofactor.

The enzyme catalyses (2R)-2,3-dihydroxy-3-methylbutanoate + NADP(+) = (2S)-2-acetolactate + NADPH + H(+). It carries out the reaction (2R,3R)-2,3-dihydroxy-3-methylpentanoate + NADP(+) = (S)-2-ethyl-2-hydroxy-3-oxobutanoate + NADPH + H(+). It functions in the pathway amino-acid biosynthesis; L-isoleucine biosynthesis; L-isoleucine from 2-oxobutanoate: step 2/4. Its pathway is amino-acid biosynthesis; L-valine biosynthesis; L-valine from pyruvate: step 2/4. Its function is as follows. Involved in the biosynthesis of branched-chain amino acids (BCAA). Catalyzes an alkyl-migration followed by a ketol-acid reduction of (S)-2-acetolactate (S2AL) to yield (R)-2,3-dihydroxy-isovalerate. In the isomerase reaction, S2AL is rearranged via a Mg-dependent methyl migration to produce 3-hydroxy-3-methyl-2-ketobutyrate (HMKB). In the reductase reaction, this 2-ketoacid undergoes a metal-dependent reduction by NADPH to yield (R)-2,3-dihydroxy-isovalerate. The chain is Ketol-acid reductoisomerase (NADP(+)) from Mycobacterium leprae (strain TN).